A 515-amino-acid polypeptide reads, in one-letter code: Elongation factor 1-alpha S (515 aa).

Residues 5 to 258 (KTHINLVVIG…DAMKPPKRPT (254 aa)) form the tr-type G domain. The tract at residues 14–21 (GHVDAGKS) is G1. 14 to 21 (GHVDAGKS) is a GTP binding site. K55 bears the N6,N6-dimethyllysine mark. The tract at residues 70-74 (GITID) is G2. The residue at position 79 (K79) is an N6,N6,N6-trimethyllysine. A G3 region spans residues 91–94 (DAPG). Residues 91-95 (DAPGH) and 151-154 (NKMD) contribute to the GTP site. The tract at residues 151 to 154 (NKMD) is G4. Residues 187-206 (KKDKGDKKKGDKKEKKDKKD) form a disordered region. Residues 189–206 (DKGDKKKGDKKEKKDKKD) are compositionally biased toward basic and acidic residues. The tract at residues 222–224 (SGW) is G5. Residue K289 is modified to N6-methyllysine. The residue at position 334 (K334) is an N6,N6,N6-trimethyllysine. The segment at 396–419 (KRGKQTHDVSDDTEWATKDDAEPR) is disordered. The segment covering 398 to 419 (GKQTHDVSDDTEWATKDDAEPR) has biased composition (basic and acidic residues). N6,N6,N6-trimethyllysine is present on K441.

It belongs to the TRAFAC class translation factor GTPase superfamily. Classic translation factor GTPase family. EF-Tu/EF-1A subfamily.

It localises to the cytoplasm. Functionally, this protein promotes the GTP-dependent binding of aminoacyl-tRNA to the A-site of ribosomes during protein biosynthesis. The sequence is that of Elongation factor 1-alpha S (TEF-S) from Porphyra purpurea (Red seaweed).